The chain runs to 527 residues: Glutamate--cysteine ligase (527 aa).

It belongs to the glutamate--cysteine ligase type 1 family. Type 1 subfamily.

The enzyme catalyses L-cysteine + L-glutamate + ATP = gamma-L-glutamyl-L-cysteine + ADP + phosphate + H(+). Its pathway is sulfur metabolism; glutathione biosynthesis; glutathione from L-cysteine and L-glutamate: step 1/2. The sequence is that of Glutamate--cysteine ligase from Bordetella bronchiseptica (strain ATCC BAA-588 / NCTC 13252 / RB50) (Alcaligenes bronchisepticus).